The sequence spans 609 residues: MQVGSKKASMGKQQQSVSDATSPRPPLAPSEKNNVGSVTRRARTMEVSSRYRSPTPTKTRRCPSPIVTRTAPSSSPESFLKRAVSAERNRGPSTPTTPVSDVLVDLPVSSRRLSTGRLPESLWPSTMRSLSVSFQSDSVSVPVSKKEKPLVTSSTDRTLRPSSSNIAHKQQSETTSVTRKQTPERKRSPLKGKNVSPGQSENSKPMDGSHSMLIPPQHRWSGRIRGNRSFDLGDKAVRRVSLPLSNKSSRHKKSSSDITRLFSCYDNGRLEVSSSTTSEDSSSTESLKHFSTSSLPRLHPMSAPGSRTASPSRSSFSSSSSSNSRGMSPSRGVSPMRGLSPVGNRSLVRSSTPPSRGVSPSRIRQTAQSSSTNTSVLSFIADVKKGKKATYIEDVHQLRLLYNRYSQWRFANARAEGVSYVQSLIAKETLYNVWHAISDLRDLVTTQRICLQQLKLEIKLRSILNDQMVCLEDWAMVEREHISSLAGAIGDLEANTLRLPLAGGTKADLGSLKLAMSSALDVMQSMGSSIWSLHSQMEEMNKLVSDLAVIAKTENFLLDKCENLLASTAVMEIEERSLKTHLIQKKQEEEVRDDAESSPLLPLSKFQWP.

Disordered regions lie at residues 1–227 (MQVG…IRGN) and 271–369 (EVSS…TAQS). 2 stretches are compositionally biased toward polar residues: residues 11 to 21 (GKQQQSVSDAT) and 46 to 57 (EVSSRYRSPTPT). Low complexity-rich tracts occupy residues 98-110 (PVSDVLVDLPVSS) and 129-143 (SLSVSFQSDSVSVPV). A compositionally biased stretch (polar residues) spans 151 to 180 (VTSSTDRTLRPSSSNIAHKQQSETTSVTRK). Low complexity-rich tracts occupy residues 271–285 (EVSSSTTSEDSSSTE) and 302–332 (SAPGSRTASPSRSSFSSSSSSNSRGMSPSRG). The QWRF motif signature appears at 407–410 (QWRF). The tract at residues 588–609 (EEEVRDDAESSPLLPLSKFQWP) is disordered.

Belongs to the QWRF family.

This Arabidopsis thaliana (Mouse-ear cress) protein is QWRF motif-containing protein 4 (QWRF4).